A 692-amino-acid chain; its full sequence is Elongation factor G (692 aa).

One can recognise a tr-type G domain in the interval 8-282 (ENTRNIGIMA…AVIDYLPSPL (275 aa)). GTP-binding positions include 17–24 (AHIDAGKT), 81–85 (DTPGH), and 135–138 (NKMD).

The protein belongs to the TRAFAC class translation factor GTPase superfamily. Classic translation factor GTPase family. EF-G/EF-2 subfamily.

The protein resides in the cytoplasm. In terms of biological role, catalyzes the GTP-dependent ribosomal translocation step during translation elongation. During this step, the ribosome changes from the pre-translocational (PRE) to the post-translocational (POST) state as the newly formed A-site-bound peptidyl-tRNA and P-site-bound deacylated tRNA move to the P and E sites, respectively. Catalyzes the coordinated movement of the two tRNA molecules, the mRNA and conformational changes in the ribosome. The polypeptide is Elongation factor G (Bacillus anthracis (strain CDC 684 / NRRL 3495)).